A 228-amino-acid chain; its full sequence is Phosphoribosylformylglycinamidine synthase subunit PurQ (228 aa).

In terms of domain architecture, Glutamine amidotransferase type-1 spans 2–228 (TVVVVQFGGS…DGKGILQAFG (227 aa)). The Nucleophile role is filled by cysteine 88. Active-site residues include histidine 205 and glutamate 207.

In terms of assembly, part of the FGAM synthase complex composed of 1 PurL, 1 PurQ and 2 PurS subunits.

The protein localises to the cytoplasm. It catalyses the reaction N(2)-formyl-N(1)-(5-phospho-beta-D-ribosyl)glycinamide + L-glutamine + ATP + H2O = 2-formamido-N(1)-(5-O-phospho-beta-D-ribosyl)acetamidine + L-glutamate + ADP + phosphate + H(+). The enzyme catalyses L-glutamine + H2O = L-glutamate + NH4(+). The protein operates within purine metabolism; IMP biosynthesis via de novo pathway; 5-amino-1-(5-phospho-D-ribosyl)imidazole from N(2)-formyl-N(1)-(5-phospho-D-ribosyl)glycinamide: step 1/2. Functionally, part of the phosphoribosylformylglycinamidine synthase complex involved in the purines biosynthetic pathway. Catalyzes the ATP-dependent conversion of formylglycinamide ribonucleotide (FGAR) and glutamine to yield formylglycinamidine ribonucleotide (FGAM) and glutamate. The FGAM synthase complex is composed of three subunits. PurQ produces an ammonia molecule by converting glutamine to glutamate. PurL transfers the ammonia molecule to FGAR to form FGAM in an ATP-dependent manner. PurS interacts with PurQ and PurL and is thought to assist in the transfer of the ammonia molecule from PurQ to PurL. This Haloquadratum walsbyi (strain DSM 16790 / HBSQ001) protein is Phosphoribosylformylglycinamidine synthase subunit PurQ.